A 355-amino-acid polypeptide reads, in one-letter code: Syntaxin-5 (355 aa).

At 1–333 the chain is on the cytoplasmic side; the sequence is MIPRKRYGSK…KYFQSVTSNR (333 aa). Residues 28–37 show a composition bias toward polar residues; sequence PATAGSSSSD. The segment at 28–51 is disordered; it reads PATAGSSSSDIAPLPPPVTLVPPP. The segment covering 40–51 has biased composition (pro residues); sequence PLPPPVTLVPPP. The short motif at 245-247 is the IxM motif; signal for cargo packaging into COPII-coated vesicles element; that stretch reads IDM. One can recognise a t-SNARE coiled-coil homology domain in the interval 263 to 325; the sequence is DSYIQSRADT…EAAHSEILKY (63 aa). Residues 287–318 are a coiled coil; sequence FQQLAHMVKEQEETIQRIDENVLGAQLDVEAA. A helical; Anchor for type IV membrane protein membrane pass occupies residues 334-354; the sequence is WLMVKIFLILIVFFIIFVVFL. Residue alanine 355 is a topological domain, vesicular.

It belongs to the syntaxin family. Part of a ternary complex containing STX5A, NSFL1C and VCP. Identified in a unique SNARE complex composed of the Golgi SNAREs GOSR1, GOSR2, YKT6 and VTI1A. Component of a SNARE complex consisting of STX5, YKT6, GOSR1 and BET1L. Interacts with BET1L. Interacts with BET1. Interacts with COG4. Interacts with GM130/GOLGA2. Interacts (via IxM motif) with SEC24C and SEC24D; mediates STX5 packaging into COPII-coated vesicles. Interacts with VLDLR; this interaction mediates VLDLR translocation from the endoplasmic reticulum to the plasma membrane.

It is found in the endoplasmic reticulum-Golgi intermediate compartment membrane. Its subcellular location is the golgi apparatus membrane. Mediates endoplasmic reticulum to Golgi transport. Together with p115/USO1 and GM130/GOLGA2, involved in vesicle tethering and fusion at the cis-Golgi membrane to maintain the stacked and inter-connected structure of the Golgi apparatus. Functionally, required for Golgi to endoplasmic reticulum retrogade transport, and for intra-Golgi transport. Its function is as follows. (Microbial infection) Required for the efficient production of infectious virion during human cytomegalovirus infection. Mechanistically, participates in the formation of the cytoplasmic viral assembly compartment where tegument acquisition and envelopment occur. The protein is Syntaxin-5 (STX5) of Homo sapiens (Human).